Reading from the N-terminus, the 179-residue chain is tRNA-splicing endonuclease (179 aa).

Active-site residues include Y115, H123, and K154.

It belongs to the tRNA-intron endonuclease family. Archaeal short subfamily. Homotetramer; although the tetramer contains four active sites, only two participate in the cleavage. Therefore, it should be considered as a dimer of dimers.

The catalysed reaction is pretRNA = a 3'-half-tRNA molecule with a 5'-OH end + a 5'-half-tRNA molecule with a 2',3'-cyclic phosphate end + an intron with a 2',3'-cyclic phosphate and a 5'-hydroxyl terminus.. Its function is as follows. Endonuclease that removes tRNA introns. Cleaves pre-tRNA at the 5'- and 3'-splice sites to release the intron. The products are an intron and two tRNA half-molecules bearing 2',3' cyclic phosphate and 5'-OH termini. Recognizes a pseudosymmetric substrate in which 2 bulged loops of 3 bases are separated by a stem of 4 bp. The polypeptide is tRNA-splicing endonuclease (Methanopyrus kandleri (strain AV19 / DSM 6324 / JCM 9639 / NBRC 100938)).